The chain runs to 156 residues: Ribonuclease H (156 aa).

The RNase H type-1 domain maps to 1–142 (MNKQVEIFTD…CDELARQAAE (142 aa)). Positions 10, 48, 70, and 134 each coordinate Mg(2+). A disordered region spans residues 135–156 (ELARQAAENPTEDDIGYQPEPQ).

The protein belongs to the RNase H family. In terms of assembly, monomer. Mg(2+) is required as a cofactor.

The protein localises to the cytoplasm. The enzyme catalyses Endonucleolytic cleavage to 5'-phosphomonoester.. Its function is as follows. Endonuclease that specifically degrades the RNA of RNA-DNA hybrids. This chain is Ribonuclease H, found in Vibrio cholerae serotype O1 (strain M66-2).